A 64-amino-acid chain; its full sequence is Large ribosomal subunit protein eL37 (64 aa).

Cys-20, Cys-23, Cys-35, and Cys-38 together coordinate Zn(2+). The C4-type zinc-finger motif lies at 20-38 (CRRCGRRAFHVRKKVCAAC).

This sequence belongs to the eukaryotic ribosomal protein eL37 family. Zn(2+) is required as a cofactor.

Binds to the 23S rRNA. This chain is Large ribosomal subunit protein eL37, found in Methanococcus maripaludis (strain C6 / ATCC BAA-1332).